The chain runs to 102 residues: Thioredoxin (102 aa).

Residues Met-1–Gln-102 enclose the Thioredoxin domain. Cys-28 and Cys-31 form a disulfide bridge.

The protein belongs to the thioredoxin family.

Functionally, participates in various redox reactions through the reversible oxidation of its active center dithiol to a disulfide and catalyzes dithiol-disulfide exchange reactions. The polypeptide is Thioredoxin (trxA) (Chlamydia muridarum (strain MoPn / Nigg)).